Reading from the N-terminus, the 989-residue chain is Presequence protease, mitochondrial (989 aa).

The N-terminal 16 residues, 1 to 16 (MLRFQRFASSYAQAQA), are a transit peptide targeting the mitochondrion. His-84 is a binding site for Zn(2+). Catalysis depends on Glu-87, which acts as the Proton acceptor. His-88 contacts Zn(2+). Residue Glu-160 is part of the active site. Glu-185 contributes to the Zn(2+) binding site. Ser-920 carries the phosphoserine modification. ATP is bound at residue 972-979 (GPGIEGKT).

This sequence belongs to the peptidase M16 family. PreP subfamily. Monomer and homodimer; homodimerization is induced by binding of the substrate. Zn(2+) is required as a cofactor.

Its subcellular location is the mitochondrion intermembrane space. It localises to the mitochondrion matrix. Its activity is regulated as follows. Activated by nucleotides, including ATP, GTP, CTP, UTP, and ADP. Activated by copper, manganese, calcium and magnesium ions; copper and manganese restore activity following inactivation by EDTA (ethylenediaminetetraacetic acid). Inhibited by metal chelators including EDTA, EGTA (ethylene glycol bis(2-aminoethyl)tetraacetic acid), and 1,10-phenanthroline. Inhibited by copper, zinc, and iron ions. Also inhibited by dithiothreitol p-mercuribenzenesulfonic acid, N-ethylmaleimide, protoporphyrin, hemin, protamine and triarginine. In terms of biological role, degrades mitochondrial transit peptides after their cleavage in the intermembrane space or in the matrix, and presequence peptides; clearance of these peptides is required to keep the presequence processing machinery running. Preferentially cleaves the N-terminal side of paired basic amino acid residues. Also degrades other unstructured peptides. May function as an ATP-dependent peptidase as opposed to a metalloendopeptidase. The polypeptide is Presequence protease, mitochondrial (Saccharomyces cerevisiae (strain ATCC 204508 / S288c) (Baker's yeast)).